Consider the following 277-residue polypeptide: 3-methyl-2-oxobutanoate hydroxymethyltransferase (277 aa).

Positions 49 and 88 each coordinate Mg(2+). 3-methyl-2-oxobutanoate contacts are provided by residues 49–50, aspartate 88, and lysine 118; that span reads DS. Residue glutamate 120 participates in Mg(2+) binding. The active-site Proton acceptor is the glutamate 186.

It belongs to the PanB family. Homodecamer; pentamer of dimers. The cofactor is Mg(2+).

Its subcellular location is the cytoplasm. It carries out the reaction 3-methyl-2-oxobutanoate + (6R)-5,10-methylene-5,6,7,8-tetrahydrofolate + H2O = 2-dehydropantoate + (6S)-5,6,7,8-tetrahydrofolate. Its pathway is cofactor biosynthesis; (R)-pantothenate biosynthesis; (R)-pantoate from 3-methyl-2-oxobutanoate: step 1/2. Its function is as follows. Catalyzes the reversible reaction in which hydroxymethyl group from 5,10-methylenetetrahydrofolate is transferred onto alpha-ketoisovalerate to form ketopantoate. The sequence is that of 3-methyl-2-oxobutanoate hydroxymethyltransferase from Cereibacter sphaeroides (strain ATCC 17025 / ATH 2.4.3) (Rhodobacter sphaeroides).